Here is an 87-residue protein sequence, read N- to C-terminus: uncharacterized protein (87 aa).

The interval 67 to 87 (TGGDPREAVVRPADQVEGYTG) is disordered.

This is an uncharacterized protein from Mycobacterium bovis (strain ATCC BAA-935 / AF2122/97).